Here is a 482-residue protein sequence, read N- to C-terminus: Signal recognition particle protein (482 aa).

GTP-binding positions include 107–114 (GLQGTGKT), 189–193 (DTAGR), and 247–250 (TKLD). 2 disordered regions span residues 380-413 (MTTE…TDVS) and 452-482 (FGGQ…FGQL). Residues 452 to 468 (FGGQPGPGFRGYRGGGG) are compositionally biased toward gly residues. Residues 469-482 (KPKKKKKKKGFGQL) show a composition bias toward basic residues.

Belongs to the GTP-binding SRP family. SRP54 subfamily. Part of the signal recognition particle protein translocation system, which is composed of SRP and FtsY.

Its subcellular location is the cytoplasm. It carries out the reaction GTP + H2O = GDP + phosphate + H(+). Its function is as follows. Involved in targeting and insertion of nascent membrane proteins into the cytoplasmic membrane. Binds to the hydrophobic signal sequence of the ribosome-nascent chain (RNC) as it emerges from the ribosomes. The SRP-RNC complex is then targeted to the cytoplasmic membrane where it interacts with the SRP receptor FtsY. In Synechocystis sp. (strain ATCC 27184 / PCC 6803 / Kazusa), this protein is Signal recognition particle protein.